Consider the following 104-residue polypeptide: Biogenesis of lysosome-related organelles complex 1 subunit BLS1 (104 aa).

This sequence belongs to the BLOC1S1 family. Component of the biogenesis of lysosome-related organelles complex-1 (BLOC-1).

Its subcellular location is the endosome. Functionally, component of the biogenesis of lysosome-related organelles complex-1 (BLOC-1), a complex involved in endosomal cargo sorting. The polypeptide is Biogenesis of lysosome-related organelles complex 1 subunit BLS1 (BLS1) (Kluyveromyces lactis (strain ATCC 8585 / CBS 2359 / DSM 70799 / NBRC 1267 / NRRL Y-1140 / WM37) (Yeast)).